The sequence spans 396 residues: 1-deoxy-D-xylulose 5-phosphate reductoisomerase (396 aa).

Residues Thr-13, Gly-14, Ser-15, Ile-16, and Asn-127 each contribute to the NADPH site. Position 128 (Lys-128) interacts with 1-deoxy-D-xylulose 5-phosphate. Residue Glu-129 coordinates NADPH. Asp-153 is a Mn(2+) binding site. The 1-deoxy-D-xylulose 5-phosphate site is built by Ser-154, Glu-155, Ser-184, and His-207. Glu-155 is a Mn(2+) binding site. Gly-213 is an NADPH binding site. The 1-deoxy-D-xylulose 5-phosphate site is built by Ser-220, Asn-225, Lys-226, and Glu-229. Mn(2+) is bound at residue Glu-229.

Belongs to the DXR family. It depends on Mg(2+) as a cofactor. Mn(2+) is required as a cofactor.

The enzyme catalyses 2-C-methyl-D-erythritol 4-phosphate + NADP(+) = 1-deoxy-D-xylulose 5-phosphate + NADPH + H(+). It participates in isoprenoid biosynthesis; isopentenyl diphosphate biosynthesis via DXP pathway; isopentenyl diphosphate from 1-deoxy-D-xylulose 5-phosphate: step 1/6. Functionally, catalyzes the NADPH-dependent rearrangement and reduction of 1-deoxy-D-xylulose-5-phosphate (DXP) to 2-C-methyl-D-erythritol 4-phosphate (MEP). This chain is 1-deoxy-D-xylulose 5-phosphate reductoisomerase, found in Pseudomonas paraeruginosa (strain DSM 24068 / PA7) (Pseudomonas aeruginosa (strain PA7)).